We begin with the raw amino-acid sequence, 70 residues long: Gas vesicle protein A (70 aa).

It belongs to the gas vesicle GvpA family. As to quaternary structure, the gas vesicle shell is 2 nm thick and consists of a single layer of this protein. It forms helical ribs nearly perpendicular to the long axis of the vesicle.

The protein localises to the gas vesicle shell. Functionally, gas vesicles are hollow, gas filled proteinaceous nanostructures found in some microorganisms. During planktonic growth they allow positioning of the organism at a favorable depth for light or nutrient acquisition. GvpA forms the protein shell. This chain is Gas vesicle protein A, found in Bradyrhizobium sp. (strain ORS 278).